A 1433-amino-acid polypeptide reads, in one-letter code: Regulatory protein CAT8 (1433 aa).

The segment covering 20–38 (GSQALSGPSISNRTSSSEA) has biased composition (polar residues). A disordered region spans residues 20-40 (GSQALSGPSISNRTSSSEANP). A DNA-binding region (zn(2)-C6 fungal-type) is located at residues 70–97 (CDRCRSKKTRCDGKRPQCSQCAAVGFEC). Residues 936–946 (KPLFGSQSKNS) show a composition bias toward polar residues. 4 disordered regions span residues 936-1024 (KPLF…DTKK), 1137-1162 (QNPENSKNNQFHQKGKSTNMEKNNLS), 1200-1236 (SASADPGTNKKAVTNAGANFKPPSTGSNTSQGSILGS), and 1324-1433 (LNPT…QNAK). Basic and acidic residues-rich tracts occupy residues 947 to 965 (LENRQRTPNVKRENPEHEY) and 994 to 1005 (LKYEKDAKRNAK). 3 stretches are compositionally biased toward polar residues: residues 1138–1162 (NPENSKNNQFHQKGKSTNMEKNNLS), 1221–1235 (PPSTGSNTSQGSILG), and 1326–1348 (PTDSILSQGMVSSVSTRNTSNQR). Low complexity predominate over residues 1349 to 1362 (SLSSGNDSKGDSSS). 2 stretches are compositionally biased toward polar residues: residues 1363–1391 (QENSKSATGNQLDTPSTLFQMRRTSSGPS) and 1418–1433 (SNTDNVSDLFQWQNAK).

Post-translationally, could be the target of the SNF1/CAT1 - SNF4/CAT3 kinase complex.

It localises to the nucleus. Functionally, activator of the gluconeogenic enzymes FBP1 and PCK1 genes. The chain is Regulatory protein CAT8 (CAT8) from Saccharomyces cerevisiae (strain ATCC 204508 / S288c) (Baker's yeast).